The following is a 154-amino-acid chain: Superoxide dismutase [Cu-Zn] (154 aa).

Residues His-47, His-49, and His-64 each contribute to the Cu cation site. Cysteines 58 and 147 form a disulfide. Positions 64, 72, 81, and 84 each coordinate Zn(2+). Cu cation is bound at residue His-121. The segment covering 125–136 (DDLGKGGNEESL) has biased composition (basic and acidic residues). The segment at 125 to 144 (DDLGKGGNEESLKTGNAGPR) is disordered. Arg-144 serves as a coordination point for substrate.

The protein belongs to the Cu-Zn superoxide dismutase family. In terms of assembly, homodimer. The cofactor is Cu cation. It depends on Zn(2+) as a cofactor.

The protein resides in the cytoplasm. The catalysed reaction is 2 superoxide + 2 H(+) = H2O2 + O2. In terms of biological role, destroys radicals which are normally produced within the cells and which are toxic to biological systems. The protein is Superoxide dismutase [Cu-Zn] (SOD1) of Candida glabrata (strain ATCC 2001 / BCRC 20586 / JCM 3761 / NBRC 0622 / NRRL Y-65 / CBS 138) (Yeast).